The chain runs to 196 residues: DnaA initiator-associating protein DiaA (196 aa).

In terms of domain architecture, SIS spans 34-196 (LVQSLLNGNK…DNTLFPHQAD (163 aa)).

It belongs to the SIS family. DiaA subfamily. As to quaternary structure, homotetramer; dimer of dimers.

In terms of biological role, required for the timely initiation of chromosomal replication via direct interactions with the DnaA initiator protein. The sequence is that of DnaA initiator-associating protein DiaA from Edwardsiella ictaluri (strain 93-146).